The chain runs to 921 residues: Alanine--tRNA ligase (921 aa).

The Zn(2+) site is built by His602, His606, Cys706, and His710.

This sequence belongs to the class-II aminoacyl-tRNA synthetase family. Zn(2+) serves as cofactor.

The protein localises to the cytoplasm. The enzyme catalyses tRNA(Ala) + L-alanine + ATP = L-alanyl-tRNA(Ala) + AMP + diphosphate. Functionally, catalyzes the attachment of alanine to tRNA(Ala) in a two-step reaction: alanine is first activated by ATP to form Ala-AMP and then transferred to the acceptor end of tRNA(Ala). Also edits incorrectly charged Ser-tRNA(Ala) and Gly-tRNA(Ala) via its editing domain. This is Alanine--tRNA ligase from Hyperthermus butylicus (strain DSM 5456 / JCM 9403 / PLM1-5).